We begin with the raw amino-acid sequence, 724 residues long: MDHHKQLTLQTTLESCNNLYNLLFNSIGSIKPSQQQQQQQQNQKNTNSVTSNTNIINDQEIFKLNKFHLYGENNIDELYNSIELQLQTIKFTCQQYRQWDSTERDSIKFFNTQKLYNQSQQRGNLVSKTLFDCSLLGKIYLNQQKEQQQQQKQKNKQQQQQPQPLVEDLSKNISKTVEVKRKLGLLAGKLQEMTNELNNKYSTFSVLDDLLGLLKSNTEIDYNSDSYVSCNISSSTFLLDIDIYHNGEIKEVKLVHILTTTGEVEPAEQQFNDELTNSLKTDMKEFIKKVQRICDLDLLFRKYKHFDLQKAFSILQSDFLNISINSNIKYIDNKEIEMNKGFGEIKLDCCGVLIKYFQSYIEKISKMNEPYSIMIEMESSAVTNNGSLIDQSEYSRLSLKTLLQKQQHTQPSAQTDYSEQQQQQSISTQLTSIEFNEKDCLDCEPLSSMLESDSIFSPVRLVCKLNKPILITNQQLSKILNLSKIHRSSQQPSQQQPSQQQQQQQQQQQQKKLNSVDESMNENGDSNIIENINELIKKYSIQNLLISSSSSSSSSNDSNISVNVDNSFDCEVYGMKQRYYYTGEFELGIEISRIPIYHPSQVYPTIQLLRQQIVFNILFKSCFQNLNISKSDDHHNIIDNNNDVKIFEITSNPPNSINIIFLHPIDNSFNSIDIFIKNNGDLEAFYYDNTTNIQPNIQKSTLFTKMLIKSLSISVSLACFFKNK.

3 disordered regions span residues 33-52 (SQQQ…VTSN), 147-167 (QQQQ…PLVE), and 486-524 (HRSS…NENG). Residues 140-200 (YLNQQKEQQQ…QEMTNELNNK (61 aa)) are a coiled coil. 2 stretches are compositionally biased toward low complexity: residues 147 to 164 (QQQQ…QPQP) and 488 to 510 (SSQQ…QQQQ). The span at 511-524 (KKLNSVDESMNENG) shows a compositional bias: polar residues.

Belongs to the Mediator complex subunit 1 family. Component of the Mediator complex.

It is found in the nucleus. In terms of biological role, component of the Mediator complex, a coactivator involved in the regulated transcription of nearly all RNA polymerase II-dependent genes. Mediator functions as a bridge to convey information from gene-specific regulatory proteins to the basal RNA polymerase II transcription machinery. Mediator is recruited to promoters by direct interactions with regulatory proteins and serves as a scaffold for the assembly of a functional preinitiation complex with RNA polymerase II and the general transcription factors. The polypeptide is Putative mediator of RNA polymerase II transcription subunit 1 (med1) (Dictyostelium discoideum (Social amoeba)).